We begin with the raw amino-acid sequence, 560 residues long: Putative ABC transporter ATP-binding protein SP_0483 (560 aa).

ABC transporter domains lie at 6–247 and 297–528; these read IEWK…GIRE and FRLE…ANLK. Residues 40-47 and 329-336 each bind ATP; these read GPSGSGKS and GKNGAGKS.

This sequence belongs to the ABC transporter superfamily.

It localises to the cell membrane. Its function is as follows. Probably part of an ABC transporter complex. Responsible for energy coupling to the transport system. In Streptococcus pneumoniae serotype 4 (strain ATCC BAA-334 / TIGR4), this protein is Putative ABC transporter ATP-binding protein SP_0483.